Consider the following 101-residue polypeptide: Salivary thrombin inhibitor anophelin (101 aa).

The first 21 residues, 1 to 21, serve as a signal peptide directing secretion; the sequence is MASKVIVIALLCIALAAFVQG. Residues 26–101 are disordered; sequence THGEEPEYDE…SDSSSGSTEN (76 aa). Positions 31 to 40 are enriched in acidic residues; sequence PEYDEDDGAD. A blocks active site cleft of host thrombin in a reverse direction compared to substrates region spans residues 75–78; that stretch reads DPGR. Over residues 75–87 the composition is skewed to basic and acidic residues; it reads DPGRRPEFLKQHN. Polar residues predominate over residues 88–101; that stretch reads NENQSDSSSGSTEN. N-linked (GlcNAc...) asparagine glycosylation is present at asparagine 90.

Belongs to the anophelin family. As to quaternary structure, interacts with human F2 (thrombin); the interaction results in thrombin inhibition.

Its subcellular location is the secreted. In terms of biological role, salivary protein with anticoagulant activity that inhibits host thrombin (F2). This chain is Salivary thrombin inhibitor anophelin, found in Anopheles stephensi (Indo-Pakistan malaria mosquito).